The sequence spans 105 residues: Small ribosomal subunit protein uS10 (105 aa).

The protein belongs to the universal ribosomal protein uS10 family. As to quaternary structure, part of the 30S ribosomal subunit.

Its function is as follows. Involved in the binding of tRNA to the ribosomes. The chain is Small ribosomal subunit protein uS10 from Rickettsia prowazekii (strain Madrid E).